Consider the following 580-residue polypeptide: Arginine--tRNA ligase (580 aa).

The short motif at 123 to 133 (PNLAKEMHVGH) is the 'HIGH' region element.

Belongs to the class-I aminoacyl-tRNA synthetase family. As to quaternary structure, monomer.

It localises to the cytoplasm. The enzyme catalyses tRNA(Arg) + L-arginine + ATP = L-arginyl-tRNA(Arg) + AMP + diphosphate. The sequence is that of Arginine--tRNA ligase from Pseudoalteromonas translucida (strain TAC 125).